Consider the following 145-residue polypeptide: uncharacterized protein (145 aa).

Residues 97-117 form a helical membrane-spanning segment; that stretch reads ISMLLLIVIIAIGLTISYMVI.

It localises to the membrane. This is an uncharacterized protein from Methanocaldococcus jannaschii (strain ATCC 43067 / DSM 2661 / JAL-1 / JCM 10045 / NBRC 100440) (Methanococcus jannaschii).